A 166-amino-acid polypeptide reads, in one-letter code: Transcriptional repressor NrdR (166 aa).

A zinc finger spans residues Cys3–Cys34. The region spanning Leu49 to Lys139 is the ATP-cone domain.

The protein belongs to the NrdR family. Requires Zn(2+) as cofactor.

Functionally, negatively regulates transcription of bacterial ribonucleotide reductase nrd genes and operons by binding to NrdR-boxes. This chain is Transcriptional repressor NrdR, found in Chloroflexus aurantiacus (strain ATCC 29364 / DSM 637 / Y-400-fl).